The following is a 261-amino-acid chain: Basic leucine zipper 19 (261 aa).

Disordered regions lie at residues 1–22 and 74–100; these read MEDG…MGEL and ESDE…LGNR. Positions 8–18 are enriched in polar residues; sequence FSNQEVFSSSE. Residues 88–100 show a composition bias toward basic and acidic residues; sequence CGKKGEKRPLGNR. Residues 89 to 155 enclose the bZIP domain; that stretch reads GKKGEKRPLG…SRLKCLLVDL (67 aa). The segment at 90 to 113 is basic motif; the sequence is KKGEKRPLGNREAVRKYREKKKAK. Residues 117–131 form a leucine-zipper region; that stretch reads LEDEVARLRAVNQQL. Residues 237 to 248 show a composition bias toward low complexity; it reads NGSFSNVNTSVS. The segment at 237-261 is disordered; that stretch reads NGSFSNVNTSVSNKRKGGHRASRAV. The segment covering 249–261 has biased composition (basic residues); it reads NKRKGGHRASRAV.

The protein resides in the nucleus. In terms of biological role, transcription factor involved in the response to zinc ion deficiency. Binds to the consensus sequence 5'-[AG]TGTCGACA[CT]-3' also called zinc deficiency response element (ZDRE). The ZDRE sequence is conserved in the plant kingdom and present in the promoters of genes that constitute the primary response to zinc deficiency, comprising additional ZIP metal transporter genes. Required for zinc accumulation in roots. Mediates the expression of the zinc transporters ZIP3, ZIP4, ZIP5 and ZIP9 during growth in zinc-deficient conditions. ZIP9 transporter is involved in zinc uptake in roots. The protein is Basic leucine zipper 19 of Arabidopsis thaliana (Mouse-ear cress).